The primary structure comprises 478 residues: Trigger factor (478 aa).

Basic and acidic residues predominate over residues 154-167 (MAKDSRSFEPREEG). Disordered regions lie at residues 154–173 (MAKD…AQSG) and 441–478 (KEAL…KAAG). One can recognise a PPIase FKBP-type domain in the interval 173-258 (GDRVTIDFVG…VKAVAAPGET (86 aa)).

It belongs to the FKBP-type PPIase family. Tig subfamily.

The protein localises to the cytoplasm. The catalysed reaction is [protein]-peptidylproline (omega=180) = [protein]-peptidylproline (omega=0). In terms of biological role, involved in protein export. Acts as a chaperone by maintaining the newly synthesized protein in an open conformation. Functions as a peptidyl-prolyl cis-trans isomerase. The chain is Trigger factor from Methylorubrum extorquens (strain CM4 / NCIMB 13688) (Methylobacterium extorquens).